A 159-amino-acid polypeptide reads, in one-letter code: Phosphopantetheine adenylyltransferase (159 aa).

Thr-10 is a binding site for substrate. Residues 10 to 11 and His-18 each bind ATP; that span reads TF. Positions 42, 74, and 88 each coordinate substrate. Residues 89–91, Glu-99, and 124–130 each bind ATP; these read GLR and WSFISSS.

Belongs to the bacterial CoaD family. As to quaternary structure, homohexamer. It depends on Mg(2+) as a cofactor.

Its subcellular location is the cytoplasm. It catalyses the reaction (R)-4'-phosphopantetheine + ATP + H(+) = 3'-dephospho-CoA + diphosphate. It participates in cofactor biosynthesis; coenzyme A biosynthesis; CoA from (R)-pantothenate: step 4/5. Its function is as follows. Reversibly transfers an adenylyl group from ATP to 4'-phosphopantetheine, yielding dephospho-CoA (dPCoA) and pyrophosphate. The sequence is that of Phosphopantetheine adenylyltransferase from Citrobacter koseri (strain ATCC BAA-895 / CDC 4225-83 / SGSC4696).